We begin with the raw amino-acid sequence, 138 residues long: Basic phospholipase A2 Tpu-G6D49 (138 aa).

An N-terminal signal peptide occupies residues 1 to 16 (MRTLWIMAVLLVGVEG). 7 cysteine pairs are disulfide-bonded: cysteine 42-cysteine 131, cysteine 44-cysteine 60, cysteine 59-cysteine 111, cysteine 65-cysteine 138, cysteine 66-cysteine 104, cysteine 73-cysteine 97, and cysteine 91-cysteine 102. Ca(2+)-binding residues include tyrosine 43, glycine 45, and glycine 47. Residue histidine 63 is part of the active site. Residue aspartate 64 coordinates Ca(2+). Aspartate 105 is an active-site residue.

In terms of assembly, monomer. Ca(2+) is required as a cofactor. In terms of tissue distribution, expressed by the venom gland.

It localises to the secreted. The catalysed reaction is a 1,2-diacyl-sn-glycero-3-phosphocholine + H2O = a 1-acyl-sn-glycero-3-phosphocholine + a fatty acid + H(+). Functionally, snake venom phospholipase A2 (PLA2) that impairs hemostasis. It weakly inhibits ADP-induced platelet aggregation when tested on platelet rich plasma from human and rabbit blood (15-25% of inhibition at 5-10 ug of enzyme), and dose-dependently inhibits blood coagulation, possibly by inhibiting thrombin activation. Also induces local edema a few hours after injection in the hind foot. Exhibits high hydrolytic activities toward L-dipalmitoyl phosphatidylcholine. PLA2 catalyzes the calcium-dependent hydrolysis of the 2-acyl groups in 3-sn-phosphoglycerides. The polypeptide is Basic phospholipase A2 Tpu-G6D49 (Craspedocephalus puniceus (Flat-nosed pitviper)).